The primary structure comprises 66 residues: Putative inactive (E)-beta-ocimene synthase, chloroplastic (66 aa).

The transit peptide at 1–25 directs the protein to the chloroplast; that stretch reads MAAHNLCFNSAFVCNVHHQKTQHFP.

The protein belongs to the terpene synthase family. Tpsb subfamily. In terms of tissue distribution, expressed exclusively in flowers.

It is found in the plastid. The protein resides in the chloroplast. The chain is Putative inactive (E)-beta-ocimene synthase, chloroplastic (TPS02) from Arabidopsis thaliana (Mouse-ear cress).